We begin with the raw amino-acid sequence, 91 residues long: Small ribosomal subunit protein uS19 (91 aa).

This sequence belongs to the universal ribosomal protein uS19 family.

In terms of biological role, protein S19 forms a complex with S13 that binds strongly to the 16S ribosomal RNA. This is Small ribosomal subunit protein uS19 from Bordetella bronchiseptica (strain ATCC BAA-588 / NCTC 13252 / RB50) (Alcaligenes bronchisepticus).